Consider the following 460-residue polypeptide: MGGKKKVHPKTRTAAFKASEPSEIVEAPHSFVIHRGLACPYITDLTLDFRRIMEPFTASNLREKRMNRIKDFVSLSSFFHVSHMGIFNKASTQLSFKVVRLPRGPSLTFKVHQFTLARDVISLSKKQMIDNDHFKHAPLVIMNNFSGDGKHLKLMATTFQNMFPSINLATVNIGTIRRCVLFSYNPDTKLVEMRHYSVQVVPVGLKRAVQKIVKGTVPNLGKCNEVVDFVTKDGYASESEAEDDEQSHVVLAQTLKSKGNLEDKKSSIKLHEIGPRLTMQLIKIEEGLLTGEVLYHDHVVKTEDEKETLRKLVEKKRKQKEQRKKEQAENRARNLKLKKDEKWAAKRAAEGRTDSDPEDDAEYYKEEVGEEPDEELFKMEAKSSRKRPSLGGGMKYKNKRAKLDTKDKNDKSERTDKYDRKDKFDRKDKKDKFDPKNRRAKFDPKNKRAKFDHRKSRKSK.

The Brix domain maps to 28 to 290 (PHSFVIHRGL…LIKIEEGLLT (263 aa)). 2 positions are modified to phosphoserine: Ser-237 and Ser-239. A coiled-coil region spans residues 295–350 (YHDHVVKTEDEKETLRKLVEKKRKQKEQRKKEQAENRARNLKLKKDEKWAAKRAAE). The interval 315-460 (KKRKQKEQRK…FDHRKSRKSK (146 aa)) is disordered. 2 stretches are compositionally biased toward basic and acidic residues: residues 323–355 (RKKE…RTDS) and 401–446 (AKLD…DPKN). Thr-353 carries the phosphothreonine modification. Ser-355 is modified (phosphoserine). Residues 447 to 460 (KRAKFDHRKSRKSK) are compositionally biased toward basic residues.

It belongs to the PPAN family. As to expression, ubiquitous.

Its function is as follows. Required for initiation of larval growth and normal mitotic growth but is not absolutely required for general biosynthesis or DNA replication. Required for progression of normal oogenesis and maturation of some imaginal tissues into adult structures. The sequence is that of Protein Peter pan (ppan) from Drosophila melanogaster (Fruit fly).